A 309-amino-acid chain; its full sequence is Porphobilinogen deaminase (309 aa).

S-(dipyrrolylmethanemethyl)cysteine is present on Cys-241.

Belongs to the HMBS family. As to quaternary structure, monomer. Requires dipyrromethane as cofactor.

The enzyme catalyses 4 porphobilinogen + H2O = hydroxymethylbilane + 4 NH4(+). Its pathway is porphyrin-containing compound metabolism; protoporphyrin-IX biosynthesis; coproporphyrinogen-III from 5-aminolevulinate: step 2/4. Functionally, tetrapolymerization of the monopyrrole PBG into the hydroxymethylbilane pre-uroporphyrinogen in several discrete steps. This is Porphobilinogen deaminase from Desulforamulus reducens (strain ATCC BAA-1160 / DSM 100696 / MI-1) (Desulfotomaculum reducens).